We begin with the raw amino-acid sequence, 201 residues long: Putative 3-methyladenine DNA glycosylase (201 aa).

It belongs to the DNA glycosylase MPG family.

This chain is Putative 3-methyladenine DNA glycosylase, found in Clostridium novyi (strain NT).